The primary structure comprises 64 residues: Large ribosomal subunit protein bL35 (64 aa).

It belongs to the bacterial ribosomal protein bL35 family.

This Shewanella sediminis (strain HAW-EB3) protein is Large ribosomal subunit protein bL35.